Reading from the N-terminus, the 244-residue chain is DNA polymerase sliding clamp (244 aa).

It belongs to the PCNA family. As to quaternary structure, homotrimer. The subunits circularize to form a toroid; DNA passes through its center. Replication factor C (RFC) is required to load the toroid on the DNA.

Its function is as follows. Sliding clamp subunit that acts as a moving platform for DNA processing. Responsible for tethering the catalytic subunit of DNA polymerase and other proteins to DNA during high-speed replication. The chain is DNA polymerase sliding clamp from Methanothrix thermoacetophila (strain DSM 6194 / JCM 14653 / NBRC 101360 / PT) (Methanosaeta thermophila).